The chain runs to 172 residues: Ribosome maturation factor RimM (172 aa).

The region spanning 96–168 is the PRC barrel domain; the sequence is EGEFYYHQII…RVDVELMEGL (73 aa).

The protein belongs to the RimM family. As to quaternary structure, binds ribosomal protein uS19.

It localises to the cytoplasm. Its function is as follows. An accessory protein needed during the final step in the assembly of 30S ribosomal subunit, possibly for assembly of the head region. Essential for efficient processing of 16S rRNA. May be needed both before and after RbfA during the maturation of 16S rRNA. It has affinity for free ribosomal 30S subunits but not for 70S ribosomes. In Streptococcus pyogenes serotype M1, this protein is Ribosome maturation factor RimM.